We begin with the raw amino-acid sequence, 663 residues long: Preterminal protein (663 aa).

The short motif at 367–376 (SLPLPTRRRR) is the Nuclear localization signal element. The segment at 374-414 (RRRVARPAPPSPSPSPEPVELEMPPLEGEEEEEEEELPPRS) is disordered. A compositionally biased stretch (pro residues) spans 380-390 (PAPPSPSPSPE). The span at 400-409 (EGEEEEEEEE) shows a compositional bias: acidic residues. At serine 575 the chain carries O-(5'-phospho-DNA)-serine. Residues 632-663 (QLQPMPELNDPVQLPPLRPERQRPPLGPRRPL) are disordered.

Belongs to the adenoviridae terminal protein family. Heterodimer with the polymerase; this heterodimer binds to bp 9 to 18 of the genome. Interacts with host POU2F1; POU2F1 binds to the auxiliary sequences in the inverted terminal repeats and tethers the pTP-POL heterodimer to the origin DNA thereby participating in the assembly of the pre-initiation complex (POL-TP-DBP-NFIA-POU2F1). Post-translationally, preterminal protein is used to replicate viral genome, upon genomic encapsidation it is processed first into iTP and finally into TP by adenovirus protease.

It is found in the host nucleus matrix. Protein covalently bound to the viral DNA that acts as a primer for viral genomic replication by DNA strand displacement. Assembles on the viral origin of replication in an initiation complex with viral polymerase, DBP, host NFIA and host POU2F1/OCT1. During initiation, the polymerase covalently couples the first dCTP with Ser-580 of pTP. The terminal protein stimulates the template activity over 20 fold compared to protein-free templates. Neo-synthesized viral genomes are linked to two preterminal proteins, one for each 5' end. These new genomes are encapsidated in the nucleus, and during capsid maturation by viral protease, preterminal protein is first cleaved into intermediary (iTP), then into mature TP. May play a role in host nuclear matrix localization of genomic DNA. This is Preterminal protein from Bos taurus (Bovine).